A 1031-amino-acid chain; its full sequence is Receptor-like protein EIX1 (1031 aa).

A signal peptide spans 1–29 (MDKWKYARLAQFLFTLSLLFLETSFGLGG). Residue Asn-30 is glycosylated (N-linked (GlcNAc...) asparagine). Positions 30–113 (NKTLCLDKER…PRLTGKLSPS (84 aa)) are N-cap. Residues 30–971 (NKTLCLDKER…DEEEEFPSLE (942 aa)) are Extracellular-facing. An LRR 1 repeat occupies 117–140 (LEYLNYLDLSVNEFERSEIPRFIG). The LRR 2; degenerate repeat unit spans residues 142-165 (LKRLEYLNLSASFFSGVIPIQFQN). Residues Asn-149 and Asn-165 are each glycosylated (N-linked (GlcNAc...) asparagine). LRR repeat units follow at residues 166-189 (LTSL…WLSH), 191-215 (SSLE…ITKV), 216-240 (PSLK…DLAN), and 243-266 (LISL…SWVF). Asn-240 carries an N-linked (GlcNAc...) asparagine glycan. Asn-267 carries an N-linked (GlcNAc...) asparagine glycan. LRR repeat units lie at residues 269–292 (TTSL…RFGT), 293–317 (LMYL…SFGN), 318–341 (LTRL…LFLR), 346–369 (RKSL…ATRF), 370–393 (SSLK…AGQV), 394–416 (STLE…LALF), 417–440 (PSLR…IGKL), 441–463 (SQLR…MGQL), 465–487 (NLES…HLSN), 488–509 (LSSL…SFNW), 512–536 (PFQL…LQNQ), 538–559 (NYTV…WFSS), 561–584 (PPDL…LIEN), and 586–611 (YGYR…NVQI). The N-linked (GlcNAc...) asparagine glycan is linked to Asn-317. Asn-365 and Asn-383 each carry an N-linked (GlcNAc...) asparagine glycan. N-linked (GlcNAc...) asparagine glycosylation occurs at Asn-487. Asn-538, Asn-568, and Asn-597 each carry an N-linked (GlcNAc...) asparagine glycan. One copy of the LRR 21; degenerate repeat lies at 612–629 (FYLHKNQFFGSISSICRS). LRR repeat units lie at residues 630-654 (RTSP…WMNM), 655-678 (TSLA…LGSL), 679-703 (TNLK…QCQG), 705-725 (QILD…IGTD), 726-750 (LLNL…ICQL), and 752-773 (FLQI…CFNN). Asn-653 and Asn-666 each carry an N-linked (GlcNAc...) asparagine glycan. N-linked (GlcNAc...) asparagine glycosylation is found at Asn-773 and Asn-781. LRR repeat units lie at residues 823-847 (LLYL…IADM), 848-871 (RGLK…IGQM), 872-895 (RMLE…LANL), and 896-918 (TFLS…STQL). N-linked (GlcNAc...) asparagine glycans are attached at residues Asn-854, Asn-861, and Asn-894. Positions 919 to 971 (QSFDRSSYSDNAQLCGPPLQECPGYAPPSPLIDHGSNNNPQEHDEEEEFPSLE) are C-cap/acidic domain. Residues 972-992 (FYISMVLSFFVAFWGILGCLI) traverse the membrane as a helical segment. Residues 993–1031 (VNSSWRNAYFKFLTDTTSWLDMISRVWFARLKKKLRRAR) lie on the Cytoplasmic side of the membrane.

The protein belongs to the RLP family. Interacts with EIX elicitor protein.

The protein localises to the cell membrane. Involved in plant defense. Confers resistance to the fungal pathogen T.viride through recognition of the EIX elicitor protein. This Solanum lycopersicum (Tomato) protein is Receptor-like protein EIX1.